Consider the following 142-residue polypeptide: Neuritin (142 aa).

An N-terminal signal peptide occupies residues 1 to 27; the sequence is MGLKLNGRYISLILAVQIAYLVQAVRA. G116 carries GPI-anchor amidated glycine lipidation. Residues 117-142 constitute a propeptide, removed in mature form; the sequence is AAGSLLPALSVLLVSLSAALATWFSF.

Belongs to the neuritin family. As to quaternary structure, component of the outer core of AMPAR complex. AMPAR complex consists of an inner core made of 4 pore-forming GluA/GRIA proteins (GRIA1, GRIA2, GRIA3 and GRIA4) and 4 major auxiliary subunits arranged in a twofold symmetry. One of the two pairs of distinct binding sites is occupied either by CNIH2, CNIH3 or CACNG2, CACNG3. The other harbors CACNG2, CACNG3, CACNG4, CACNG8 or GSG1L. This inner core of AMPAR complex is complemented by outer core constituents binding directly to the GluA/GRIA proteins at sites distinct from the interaction sites of the inner core constituents. Outer core constituents include at least PRRT1, PRRT2, CKAMP44/SHISA9, FRRS1L and NRN1. The proteins of the inner and outer core serve as a platform for other, more peripherally associated AMPAR constituents. Alone or in combination, these auxiliary subunits control the gating and pharmacology of the AMPAR complex and profoundly impact their biogenesis and protein processing. As to expression, expressed in the brain (at protein level).

The protein localises to the cell membrane. Its subcellular location is the synapse. Its function is as follows. Promotes neurite outgrowth and especially branching of neuritic processes in primary hippocampal and cortical cells. This Mus musculus (Mouse) protein is Neuritin (Nrn1).